A 378-amino-acid polypeptide reads, in one-letter code: ATP phosphoribosyltransferase regulatory subunit (378 aa).

It belongs to the class-II aminoacyl-tRNA synthetase family. HisZ subfamily. As to quaternary structure, heteromultimer composed of HisG and HisZ subunits.

It is found in the cytoplasm. It participates in amino-acid biosynthesis; L-histidine biosynthesis; L-histidine from 5-phospho-alpha-D-ribose 1-diphosphate: step 1/9. In terms of biological role, required for the first step of histidine biosynthesis. May allow the feedback regulation of ATP phosphoribosyltransferase activity by histidine. The protein is ATP phosphoribosyltransferase regulatory subunit of Brucella abortus (strain 2308).